Reading from the N-terminus, the 264-residue chain is Vacuolar protein sorting-associated protein 75 (264 aa).

Ser-3 carries the post-translational modification Phosphoserine. The interval 223 to 264 (LEDEEGESGLSADGDSEDDDGSLGEVDLPLSDEEPSSKKRKV) is disordered.

This sequence belongs to the nucleosome assembly protein (NAP) family. In terms of assembly, homodimer. Homotetramer. Forms a complex with RTT109; consisting of a VPS75 dimer contacted by two RTT109 subunits. Interacts with RTT109; the interaction is direct. Interacts with ASF1. Interacts with histone H3/H4 heterodimers and heterotetramers via histone H3.

It localises to the nucleus. Functionally, histone chaperone which acts as a cofactor stimulating histone H3 acetylation by RTT109. Preferentially stimulates histone H3 'Lys-9' acetylation by RTT109. May also stimulate histone H3 'Lys-56' acetylation by RTT109. Assembles nucleosomes (in vitro). This Saccharomyces cerevisiae (strain ATCC 204508 / S288c) (Baker's yeast) protein is Vacuolar protein sorting-associated protein 75 (VPS75).